Here is a 128-residue protein sequence, read N- to C-terminus: Large ribosomal subunit protein bL20c (128 aa).

The protein belongs to the bacterial ribosomal protein bL20 family. Component of the chloroplast large ribosomal subunit (LSU). Mature 70S chloroplast ribosomes of higher plants consist of a small (30S) and a large (50S) subunit. The 30S small subunit contains 1 molecule of ribosomal RNA (16S rRNA) and 24 different proteins. The 50S large subunit contains 3 rRNA molecules (23S, 5S and 4.5S rRNA) and 33 different proteins.

The protein localises to the plastid. It is found in the chloroplast. Its function is as follows. Component of the chloroplast ribosome (chloro-ribosome), a dedicated translation machinery responsible for the synthesis of chloroplast genome-encoded proteins, including proteins of the transcription and translation machinery and components of the photosynthetic apparatus. This chain is Large ribosomal subunit protein bL20c (rpl20), found in Spinacia oleracea (Spinach).